The following is a 525-amino-acid chain: GMP synthase [glutamine-hydrolyzing] (525 aa).

Positions 9-207 constitute a Glutamine amidotransferase type-1 domain; the sequence is RILILDFGSQ…VRDICQCEAL (199 aa). Catalysis depends on Cys-86, which acts as the Nucleophile. Catalysis depends on residues His-181 and Glu-183. The region spanning 208–400 is the GMPS ATP-PPase domain; it reads WTPAKIIDDA…LGLPYDMLYR (193 aa). 235–241 is an ATP binding site; it reads SGGVDSS.

Homodimer.

It carries out the reaction XMP + L-glutamine + ATP + H2O = GMP + L-glutamate + AMP + diphosphate + 2 H(+). Its pathway is purine metabolism; GMP biosynthesis; GMP from XMP (L-Gln route): step 1/1. In terms of biological role, catalyzes the synthesis of GMP from XMP. This chain is GMP synthase [glutamine-hydrolyzing], found in Escherichia coli O17:K52:H18 (strain UMN026 / ExPEC).